A 493-amino-acid chain; its full sequence is Amphoterin-induced protein 1 (493 aa).

The first 27 residues, M1–A27, serve as a signal peptide directing secretion. In terms of domain architecture, LRRNT spans G28–S61. Over G28 to T372 the chain is Extracellular. Cystine bridges form between C34-C40 and C38-C47. LRR repeat units follow at residues Y62–T83, Q87–P108, N111–D132, V135–D156, Q159–K179, and K186–Q206. An N-linked (GlcNAc...) asparagine glycan is attached at N72. An LRRCT domain is found at N221–E272. Cystine bridges form between C225/C253, C227/C270, and C290/C341. N-linked (GlcNAc...) asparagine glycosylation is found at N264, N315, N349, and N360. Residues N269–S353 enclose the Ig-like C2-type domain. The chain crosses the membrane as a helical span at residues A373–L393. Residues T394–V493 lie on the Cytoplasmic side of the membrane. The segment at K405–V493 is disordered. The segment covering S408–N424 has biased composition (polar residues). Over residues G431–A442 the composition is skewed to basic and acidic residues. Residues S477 and S481 each carry the phosphoserine modification.

The protein belongs to the immunoglobulin superfamily. AMIGO family. Homodimer, and heterodimer with AMIGO2 and AMIGO3. Interacts with KCNB1.

The protein localises to the cell membrane. It localises to the perikaryon. The protein resides in the cell projection. It is found in the dendrite. Its subcellular location is the axon. Promotes growth and fasciculation of neurites from cultured hippocampal neurons. May be involved in fasciculation as well as myelination of developing neural axons. May have a role in regeneration as well as neural plasticity in the adult nervous system. May mediate homophilic as well as heterophilic cell-cell interaction and contribute to signal transduction through its intracellular domain. Assembled with KCNB1 modulates the gating characteristics of the delayed rectifier voltage-dependent potassium channel KCNB1. The protein is Amphoterin-induced protein 1 of Homo sapiens (Human).